A 426-amino-acid polypeptide reads, in one-letter code: Glutamate-1-semialdehyde 2,1-aminomutase (426 aa).

Residue lysine 265 is modified to N6-(pyridoxal phosphate)lysine.

This sequence belongs to the class-III pyridoxal-phosphate-dependent aminotransferase family. HemL subfamily. Homodimer. Pyridoxal 5'-phosphate is required as a cofactor.

The protein resides in the cytoplasm. The catalysed reaction is (S)-4-amino-5-oxopentanoate = 5-aminolevulinate. It functions in the pathway porphyrin-containing compound metabolism; protoporphyrin-IX biosynthesis; 5-aminolevulinate from L-glutamyl-tRNA(Glu): step 2/2. This chain is Glutamate-1-semialdehyde 2,1-aminomutase, found in Hahella chejuensis (strain KCTC 2396).